Here is a 292-residue protein sequence, read N- to C-terminus: MDKVKIALQYMLPKHLLSRLVGKLAASEAGALTTAAIKWFIKQYKIDMSEAAQSEPEAYKSFNDFFTRALKPGIRPINTATNIMVHPVDGAVSQLGPIKDGRIFQAKGHHYSSLTLLGDQAEDAKRFEGGDFATIYLAPKDYHRIHMPIKGTLSKMTYVPGELFSVNPLTARHVPGLFARNERVVAIFETELGPLAMVLVGATIVASIETVWAGTITPPTGKQVFTWEYPTVGPDAITLDKGEEMGRFKLGSTVVMLFAKDAIDTFAEGVEPEAVTRMGQAFANLKNQASAD.

Active-site charge relay system; for autoendoproteolytic cleavage activity residues include Asp89, His146, and Ser252. The Schiff-base intermediate with substrate; via pyruvic acid; for decarboxylase activity role is filled by Ser252. Ser252 is modified (pyruvic acid (Ser); by autocatalysis).

The protein belongs to the phosphatidylserine decarboxylase family. PSD-B subfamily. Prokaryotic type I sub-subfamily. Heterodimer of a large membrane-associated beta subunit and a small pyruvoyl-containing alpha subunit. It depends on pyruvate as a cofactor. In terms of processing, is synthesized initially as an inactive proenzyme. Formation of the active enzyme involves a self-maturation process in which the active site pyruvoyl group is generated from an internal serine residue via an autocatalytic post-translational modification. Two non-identical subunits are generated from the proenzyme in this reaction, and the pyruvate is formed at the N-terminus of the alpha chain, which is derived from the carboxyl end of the proenzyme. The autoendoproteolytic cleavage occurs by a canonical serine protease mechanism, in which the side chain hydroxyl group of the serine supplies its oxygen atom to form the C-terminus of the beta chain, while the remainder of the serine residue undergoes an oxidative deamination to produce ammonia and the pyruvoyl prosthetic group on the alpha chain. During this reaction, the Ser that is part of the protease active site of the proenzyme becomes the pyruvoyl prosthetic group, which constitutes an essential element of the active site of the mature decarboxylase.

It localises to the cell membrane. The catalysed reaction is a 1,2-diacyl-sn-glycero-3-phospho-L-serine + H(+) = a 1,2-diacyl-sn-glycero-3-phosphoethanolamine + CO2. Its pathway is phospholipid metabolism; phosphatidylethanolamine biosynthesis; phosphatidylethanolamine from CDP-diacylglycerol: step 2/2. In terms of biological role, catalyzes the formation of phosphatidylethanolamine (PtdEtn) from phosphatidylserine (PtdSer). The chain is Phosphatidylserine decarboxylase proenzyme from Shewanella sp. (strain ANA-3).